The chain runs to 390 residues: Cyclic amide hydrolase (390 aa).

The segment at 1 to 118 (MPNPEASLSP…TVVTQEWVAD (118 aa)) is RU A. Residues Arg-66 and 97-98 (SG) contribute to the substrate site. Residues 127–268 (GLVVGRGHTE…GEVLLLANSA (142 aa)) form an RU B region. The active site involves Lys-177. Substrate-binding positions include Asn-213, 251–252 (SS), Lys-346, and 365–366 (SG). The active-site Nucleophile is the Ser-251. An RU C region spans residues 274–390 (LRIGHGITRD…VAAVVRRLPA (117 aa)).

The protein belongs to the cyclic amide hydrolase (CyAH) family. In terms of assembly, homotetramer; disulfide-linked. The disulfide forms between 2 monomers in the tetramer, such that each tetramer contains 2 sets of vicinal disulfides.

In terms of biological role, cyclic amide hydrolase of unknown substrate specificity. Catalyzes the hydrolytic ring-opening of a cyclic amide. Does not act on cyanuric acid nor barbituric acid. The polypeptide is Cyclic amide hydrolase (Pseudofrankia inefficax (strain DSM 45817 / CECT 9037 / DDB 130130 / EuI1c) (Frankia inefficax)).